Here is a 618-residue protein sequence, read N- to C-terminus: Glucose starvation modulator protein 1 (618 aa).

The segment at residues C20–C48 is a DNA-binding region (zn(2)-C6 fungal-type). The segment at A325–E352 is disordered. Over residues A335–E352 the composition is skewed to basic and acidic residues. The PAS domain occupies L466–G538.

It belongs to the ERT1/acuK family.

It is found in the nucleus. Its function is as follows. Transcription factor which regulates nonfermentable carbon utilization. Binds specifically to 5'-CGGN(8)CGG-3' and 5'-CGGN(9)CGG-3' sequences in the promoter region. The sequence is that of Glucose starvation modulator protein 1 (GSM1) from Saccharomyces cerevisiae (strain ATCC 204508 / S288c) (Baker's yeast).